We begin with the raw amino-acid sequence, 634 residues long: Probable threonine--tRNA ligase, cytoplasmic (634 aa).

The 61-residue stretch at 1-61 (MSIYVTFKGQ…NENQKIELYD (61 aa)) folds into the TGS domain.

Belongs to the class-II aminoacyl-tRNA synthetase family.

The protein localises to the cytoplasm. It carries out the reaction tRNA(Thr) + L-threonine + ATP = L-threonyl-tRNA(Thr) + AMP + diphosphate + H(+). This Enterocytozoon bieneusi (strain H348) (Microsporidian parasite) protein is Probable threonine--tRNA ligase, cytoplasmic.